Consider the following 211-residue polypeptide: Guanylate kinase (211 aa).

Residues 5-184 (GLLIVFSGPS…AAERVKRIIE (180 aa)) enclose the Guanylate kinase-like domain. 12–19 (GPSGVGKG) is a binding site for ATP.

It belongs to the guanylate kinase family.

The protein resides in the cytoplasm. The catalysed reaction is GMP + ATP = GDP + ADP. Functionally, essential for recycling GMP and indirectly, cGMP. The polypeptide is Guanylate kinase (Streptococcus pyogenes serotype M1).